A 481-amino-acid polypeptide reads, in one-letter code: Delta(14)-sterol reductase ERG24B (481 aa).

The next 8 helical transmembrane spans lie at 11 to 31 (FGGP…MQVL), 80 to 100 (LFAY…QIVL), 125 to 145 (LTGC…WTWI), 149 to 169 (YIQL…WTYL), 244 to 264 (TYGF…YYVL), 279 to 299 (ITSD…VPFL), 313 to 333 (HLGP…LYIF), and 427 to 447 (AAPW…FLLI).

This sequence belongs to the ERG4/ERG24 family.

The protein localises to the endoplasmic reticulum membrane. The enzyme catalyses 4,4-dimethyl-5alpha-cholesta-8,24-dien-3beta-ol + NADP(+) = 4,4-dimethyl-5alpha-cholesta-8,14,24-trien-3beta-ol + NADPH + H(+). Its pathway is steroid metabolism; ergosterol biosynthesis. Its function is as follows. Delta(14)-sterol reductase; part of the third module of ergosterol biosynthesis pathway that includes the late steps of the pathway. Catalyzes the reduction of the C14=C15 double bond within 4,4,24-trimethyl ergosta-8,14,24(28)-trienolto produce 4,4-dimethylfecosterol. The third module or late pathway involves the ergosterol synthesis itself through consecutive reactions that mainly occur in the endoplasmic reticulum (ER) membrane. Firstly, the squalene synthase ERG9 catalyzes the condensation of 2 farnesyl pyrophosphate moieties to form squalene, which is the precursor of all steroids. Squalene synthase is crucial for balancing the incorporation of farnesyl diphosphate (FPP) into sterol and nonsterol isoprene synthesis. Secondly, squalene is converted into lanosterol by the consecutive action of the squalene epoxidase ERG1 and the lanosterol synthase ERG7. Then, the delta(24)-sterol C-methyltransferase ERG6 methylates lanosterol at C-24 to produce eburicol. Eburicol is the substrate of the sterol 14-alpha demethylase encoded by CYP51A, CYP51B and CYP51C, to yield 4,4,24-trimethyl ergosta-8,14,24(28)-trienol. CYP51B encodes the enzyme primarily responsible for sterol 14-alpha-demethylation, and plays an essential role in ascospore formation. CYP51A encodes an additional sterol 14-alpha-demethylase, induced on ergosterol depletion and responsible for the intrinsic variation in azole sensitivity. The third CYP51 isoform, CYP51C, does not encode a sterol 14-alpha-demethylase, but is required for full virulence on host wheat ears. The C-14 reductase ERG24 then reduces the C14=C15 double bond which leads to 4,4-dimethylfecosterol. A sequence of further demethylations at C-4, involving the C-4 demethylation complex containing the C-4 methylsterol oxidases ERG25, the sterol-4-alpha-carboxylate 3-dehydrogenase ERG26 and the 3-keto-steroid reductase ERG27, leads to the production of fecosterol via 4-methylfecosterol. ERG28 has a role as a scaffold to help anchor ERG25, ERG26 and ERG27 to the endoplasmic reticulum. The C-8 sterol isomerase ERG2 then catalyzes the reaction which results in unsaturation at C-7 in the B ring of sterols and thus converts fecosterol to episterol. The sterol-C5-desaturases ERG3A and ERG3BB then catalyze the introduction of a C-5 double bond in the B ring to produce 5-dehydroepisterol. The C-22 sterol desaturases ERG5A and ERG5B further convert 5-dehydroepisterol into ergosta-5,7,22,24(28)-tetraen-3beta-ol by forming the C-22(23) double bond in the sterol side chain. Finally, ergosta-5,7,22,24(28)-tetraen-3beta-ol is substrate of the C-24(28) sterol reductase ERG4 to produce ergosterol. This is Delta(14)-sterol reductase ERG24B from Gibberella zeae (strain ATCC MYA-4620 / CBS 123657 / FGSC 9075 / NRRL 31084 / PH-1) (Wheat head blight fungus).